The chain runs to 155 residues: MLKQVEIFTDGSCLGNPGPGGYGAILRYRGHEKTFSEGYTLTTNNRMELMAAIVALEALKEHCEVTLSTDSQYVRQGITQWIHNWKKRGWKTAEKKPVKNVDLWKRLDAALGQHQIKWVWVKGHAGHPENERCDELARAAAMHPTQEDSGYQAEA.

Positions 1–142 (MLKQVEIFTD…CDELARAAAM (142 aa)) constitute an RNase H type-1 domain. Mg(2+) contacts are provided by Asp10, Glu48, Asp70, and Asp134.

This sequence belongs to the RNase H family. In terms of assembly, monomer. Mg(2+) serves as cofactor.

It localises to the cytoplasm. It catalyses the reaction Endonucleolytic cleavage to 5'-phosphomonoester.. Its function is as follows. Endonuclease that specifically degrades the RNA of RNA-DNA hybrids. The protein is Ribonuclease H of Salmonella paratyphi C (strain RKS4594).